A 231-amino-acid chain; its full sequence is Lipoprotein-releasing system ATP-binding protein LolD (231 aa).

Residues 9–230 (FSLKDVGKEY…LRAGELYDQN (222 aa)) enclose the ABC transporter domain. 45–52 (GASGSGKS) contributes to the ATP binding site.

This sequence belongs to the ABC transporter superfamily. Lipoprotein translocase (TC 3.A.1.125) family. In terms of assembly, the complex is composed of two ATP-binding proteins (LolD) and two transmembrane proteins (LolC and LolE).

The protein localises to the cell inner membrane. Its function is as follows. Part of the ABC transporter complex LolCDE involved in the translocation of mature outer membrane-directed lipoproteins, from the inner membrane to the periplasmic chaperone, LolA. Responsible for the formation of the LolA-lipoprotein complex in an ATP-dependent manner. This is Lipoprotein-releasing system ATP-binding protein LolD from Oleidesulfovibrio alaskensis (strain ATCC BAA-1058 / DSM 17464 / G20) (Desulfovibrio alaskensis).